Here is a 107-residue protein sequence, read N- to C-terminus: Putative double-stranded DNA mimic protein HS_0995 (107 aa).

Belongs to the putative dsDNA mimic protein family.

May act as a double-stranded DNA (dsDNA) mimic. Probably regulates the activity of a dsDNA-binding protein. This chain is Putative double-stranded DNA mimic protein HS_0995, found in Histophilus somni (strain 129Pt) (Haemophilus somnus).